A 37-amino-acid polypeptide reads, in one-letter code: uncharacterized protein (37 aa).

Residues methionine 1 to alanine 21 form a helical membrane-spanning segment.

It is found in the endoplasmic reticulum membrane. This is an uncharacterized protein from Saccharomyces cerevisiae (strain ATCC 204508 / S288c) (Baker's yeast).